The following is a 786-amino-acid chain: Endonuclease MutS2 (786 aa).

Gly332 to Thr339 is a binding site for ATP. The Smr domain maps to Ile711–Lys786.

The protein belongs to the DNA mismatch repair MutS family. MutS2 subfamily. As to quaternary structure, homodimer. Binds to stalled ribosomes, contacting rRNA.

Its function is as follows. Endonuclease that is involved in the suppression of homologous recombination and thus may have a key role in the control of bacterial genetic diversity. In terms of biological role, acts as a ribosome collision sensor, splitting the ribosome into its 2 subunits. Detects stalled/collided 70S ribosomes which it binds and splits by an ATP-hydrolysis driven conformational change. Acts upstream of the ribosome quality control system (RQC), a ribosome-associated complex that mediates the extraction of incompletely synthesized nascent chains from stalled ribosomes and their subsequent degradation. Probably generates substrates for RQC. The polypeptide is Endonuclease MutS2 (Clostridium perfringens (strain 13 / Type A)).